A 512-amino-acid chain; its full sequence is Photosystem II CP47 reaction center protein (512 aa).

6 consecutive transmembrane segments (helical) span residues 21–36 (AVHLMHTALVSGWAGS), 101–115 (IVLSGLLFLAAIWHW), 140–156 (GIHLFLSGVLCFAFGAF), 203–218 (IAAGILGILAGLFHLS), 237–252 (VLSSSIAAVFFAAFVV), and 457–472 (TFALLFFFGHIWHGAR).

Belongs to the PsbB/PsbC family. PsbB subfamily. PSII is composed of 1 copy each of membrane proteins PsbA, PsbB, PsbC, PsbD, PsbE, PsbF, PsbH, PsbI, PsbJ, PsbK, PsbL, PsbM, PsbT, PsbX, PsbY, PsbZ, Psb30/Ycf12, at least 3 peripheral proteins of the oxygen-evolving complex and a large number of cofactors. It forms dimeric complexes. It depends on Binds multiple chlorophylls. PSII binds additional chlorophylls, carotenoids and specific lipids. as a cofactor.

The protein resides in the plastid. The protein localises to the chloroplast thylakoid membrane. Functionally, one of the components of the core complex of photosystem II (PSII). It binds chlorophyll and helps catalyze the primary light-induced photochemical processes of PSII. PSII is a light-driven water:plastoquinone oxidoreductase, using light energy to abstract electrons from H(2)O, generating O(2) and a proton gradient subsequently used for ATP formation. In Physcomitrium patens (Spreading-leaved earth moss), this protein is Photosystem II CP47 reaction center protein.